A 337-amino-acid chain; its full sequence is Holliday junction branch migration complex subunit RuvB (337 aa).

The interval 1–22 is disordered; the sequence is MEDERITSAEVQSPDEENEELS. The tract at residues 1 to 184 is large ATPase domain (RuvB-L); it reads MEDERITSAE…FGIVEHMNYY (184 aa). ATP contacts are provided by residues L23, R24, G65, K68, T69, T70, 131-133, R174, Y184, and R221; that span reads EDF. Residue T69 participates in Mg(2+) binding. The interval 185-255 is small ATPAse domain (RuvB-S); it reads NEADLANIVR…LVSQSLKLLQ (71 aa). The interval 258–337 is head domain (RuvB-H); sequence NRGLDRTDKK…LGLIDQYMNK (80 aa). The DNA site is built by R313 and R318.

The protein belongs to the RuvB family. In terms of assembly, homohexamer. Forms an RuvA(8)-RuvB(12)-Holliday junction (HJ) complex. HJ DNA is sandwiched between 2 RuvA tetramers; dsDNA enters through RuvA and exits via RuvB. An RuvB hexamer assembles on each DNA strand where it exits the tetramer. Each RuvB hexamer is contacted by two RuvA subunits (via domain III) on 2 adjacent RuvB subunits; this complex drives branch migration. In the full resolvosome a probable DNA-RuvA(4)-RuvB(12)-RuvC(2) complex forms which resolves the HJ.

The protein localises to the cytoplasm. The catalysed reaction is ATP + H2O = ADP + phosphate + H(+). Its function is as follows. The RuvA-RuvB-RuvC complex processes Holliday junction (HJ) DNA during genetic recombination and DNA repair, while the RuvA-RuvB complex plays an important role in the rescue of blocked DNA replication forks via replication fork reversal (RFR). RuvA specifically binds to HJ cruciform DNA, conferring on it an open structure. The RuvB hexamer acts as an ATP-dependent pump, pulling dsDNA into and through the RuvAB complex. RuvB forms 2 homohexamers on either side of HJ DNA bound by 1 or 2 RuvA tetramers; 4 subunits per hexamer contact DNA at a time. Coordinated motions by a converter formed by DNA-disengaged RuvB subunits stimulates ATP hydrolysis and nucleotide exchange. Immobilization of the converter enables RuvB to convert the ATP-contained energy into a lever motion, pulling 2 nucleotides of DNA out of the RuvA tetramer per ATP hydrolyzed, thus driving DNA branch migration. The RuvB motors rotate together with the DNA substrate, which together with the progressing nucleotide cycle form the mechanistic basis for DNA recombination by continuous HJ branch migration. Branch migration allows RuvC to scan DNA until it finds its consensus sequence, where it cleaves and resolves cruciform DNA. This chain is Holliday junction branch migration complex subunit RuvB, found in Pediococcus pentosaceus (strain ATCC 25745 / CCUG 21536 / LMG 10740 / 183-1w).